We begin with the raw amino-acid sequence, 567 residues long: Eukaryotic translation initiation factor 3 subunit D (567 aa).

2 disordered regions span residues 12–34 (PVKS…YAPF) and 122–160 (GQNV…RGRR). Residues 128-142 (GGRGGRYGSSGGRGA) are compositionally biased toward gly residues. An RNA gate region spans residues 300–314 (PFDYLTVNENAYDSP).

It belongs to the eIF-3 subunit D family. In terms of assembly, component of the eukaryotic translation initiation factor 3 (eIF-3) complex. The eIF-3 complex appears to include tif32/eif3a, SPAC25G10.08/eif3b, tif33/eif3c, SPBC4C3.07/eif3f, tif35/eif3g and sum1/eif3i. This set of common subunits may also associate exclusively with either moe1/eif3d and int6/eif3e, or with SPAC821.05/eif3h and SPAC1751.03/eif3m. The eIF-3 complex may also include SPAC3A12.13c/eif3j.

It is found in the cytoplasm. In terms of biological role, mRNA cap-binding component of the eukaryotic translation initiation factor 3 (eIF-3) complex, which is involved in protein synthesis of a specialized repertoire of mRNAs and, together with other initiation factors, stimulates binding of mRNA and methionyl-tRNAi to the 40S ribosome. The eIF-3 complex specifically targets and initiates translation of a subset of mRNAs involved in cell proliferation. In the eIF-3 complex, eif3d specifically recognizes and binds the 7-methylguanosine cap of a subset of mRNAs. This chain is Eukaryotic translation initiation factor 3 subunit D (moe1), found in Schizosaccharomyces pombe (strain 972 / ATCC 24843) (Fission yeast).